Reading from the N-terminus, the 649-residue chain is Acetyl-coenzyme A synthetase (649 aa).

CoA-binding positions include 191–194, T311, and N335; that span reads RGGR. ATP is bound by residues 387–389, 411–416, D500, and R515; these read GEP and DTWWQT. S523 is a CoA binding site. R526 is a binding site for ATP. Positions 537, 539, and 542 each coordinate Mg(2+). R584 serves as a coordination point for CoA. K609 is subject to N6-acetyllysine.

It belongs to the ATP-dependent AMP-binding enzyme family. It depends on Mg(2+) as a cofactor. Acetylated. Deacetylation by the SIR2-homolog deacetylase activates the enzyme.

The enzyme catalyses acetate + ATP + CoA = acetyl-CoA + AMP + diphosphate. Catalyzes the conversion of acetate into acetyl-CoA (AcCoA), an essential intermediate at the junction of anabolic and catabolic pathways. AcsA undergoes a two-step reaction. In the first half reaction, AcsA combines acetate with ATP to form acetyl-adenylate (AcAMP) intermediate. In the second half reaction, it can then transfer the acetyl group from AcAMP to the sulfhydryl group of CoA, forming the product AcCoA. The protein is Acetyl-coenzyme A synthetase of Psychromonas ingrahamii (strain DSM 17664 / CCUG 51855 / 37).